The chain runs to 320 residues: Cytochrome f (320 aa).

Residues 1 to 35 (MQTINTFSWIKEQITRSISISLILYIITRSSIANA) form the signal peptide. Heme contacts are provided by Y36, C56, C59, and H60. The chain crosses the membrane as a helical span at residues 286–305 (IQGLLFFFASVILAQIFLVL).

Belongs to the cytochrome f family. As to quaternary structure, the 4 large subunits of the cytochrome b6-f complex are cytochrome b6, subunit IV (17 kDa polypeptide, petD), cytochrome f and the Rieske protein, while the 4 small subunits are PetG, PetL, PetM and PetN. The complex functions as a dimer. It depends on heme as a cofactor.

The protein resides in the plastid. It localises to the chloroplast thylakoid membrane. Its function is as follows. Component of the cytochrome b6-f complex, which mediates electron transfer between photosystem II (PSII) and photosystem I (PSI), cyclic electron flow around PSI, and state transitions. The polypeptide is Cytochrome f (petA) (Spinacia oleracea (Spinach)).